We begin with the raw amino-acid sequence, 292 residues long: tRNA (guanine-N(7)-)-methyltransferase (292 aa).

The disordered stretch occupies residues methionine 1 to glutamate 54. Over residues glycine 19–leucine 42 the composition is skewed to basic and acidic residues. Residues glycine 110, glutamate 133–isoleucine 134, asparagine 168–alanine 169, and cysteine 188 each bind S-adenosyl-L-methionine. The active site involves aspartate 191. S-adenosyl-L-methionine is bound at residue threonine 266–glutamate 268.

Belongs to the class I-like SAM-binding methyltransferase superfamily. TrmB family. In terms of assembly, forms a complex with TRM82.

Its subcellular location is the nucleus. It carries out the reaction guanosine(46) in tRNA + S-adenosyl-L-methionine = N(7)-methylguanosine(46) in tRNA + S-adenosyl-L-homocysteine. Its pathway is tRNA modification; N(7)-methylguanine-tRNA biosynthesis. Functionally, catalyzes the formation of N(7)-methylguanine at position 46 (m7G46) in tRNA. This is tRNA (guanine-N(7)-)-methyltransferase from Yarrowia lipolytica (strain CLIB 122 / E 150) (Yeast).